A 570-amino-acid polypeptide reads, in one-letter code: Sulfite reductase [NADPH] hemoprotein beta-component (570 aa).

Residues Cys-434, Cys-440, Cys-479, and Cys-483 each contribute to the [4Fe-4S] cluster site. Cys-483 contacts siroheme.

Belongs to the nitrite and sulfite reductase 4Fe-4S domain family. As to quaternary structure, alpha(8)-beta(8). The alpha component is a flavoprotein, the beta component is a hemoprotein. Siroheme serves as cofactor. [4Fe-4S] cluster is required as a cofactor.

It carries out the reaction hydrogen sulfide + 3 NADP(+) + 3 H2O = sulfite + 3 NADPH + 4 H(+). It functions in the pathway sulfur metabolism; hydrogen sulfide biosynthesis; hydrogen sulfide from sulfite (NADPH route): step 1/1. Its function is as follows. Component of the sulfite reductase complex that catalyzes the 6-electron reduction of sulfite to sulfide. This is one of several activities required for the biosynthesis of L-cysteine from sulfate. The polypeptide is Sulfite reductase [NADPH] hemoprotein beta-component (Salmonella newport (strain SL254)).